The following is a 128-amino-acid chain: Holo-[acyl-carrier-protein] synthase (128 aa).

Asp9 and Glu56 together coordinate Mg(2+).

It belongs to the P-Pant transferase superfamily. AcpS family. Mg(2+) serves as cofactor.

The protein resides in the cytoplasm. The catalysed reaction is apo-[ACP] + CoA = holo-[ACP] + adenosine 3',5'-bisphosphate + H(+). In terms of biological role, transfers the 4'-phosphopantetheine moiety from coenzyme A to a Ser of acyl-carrier-protein. The protein is Holo-[acyl-carrier-protein] synthase of Pelagibacter ubique (strain HTCC1062).